We begin with the raw amino-acid sequence, 163 residues long: Large ribosomal subunit protein uL15 (163 aa).

It belongs to the universal ribosomal protein uL15 family. In terms of assembly, part of the 50S ribosomal subunit.

Its function is as follows. Binds to the 23S rRNA. The protein is Large ribosomal subunit protein uL15 of Orientia tsutsugamushi (strain Boryong) (Rickettsia tsutsugamushi).